Consider the following 786-residue polypeptide: m7GpppN-mRNA hydrolase dcap-2 (786 aa).

A compositionally biased stretch (polar residues) spans 25–61; the sequence is QKQNKSTEEPPSSVQKLLASLQQAQNKSDLSEQPSTS. A disordered region spans residues 25–148; that stretch reads QKQNKSTEEP…QQQQQYKGPR (124 aa). Residues 62-72 are compositionally biased toward basic residues; it reads KPKKNEKRKKA. 2 stretches are compositionally biased toward polar residues: residues 101–111 and 118–133; these read MQQQAENARIS and QVST…TAPE. Over residues 134–144 the composition is skewed to low complexity; that stretch reads QQNYQQQQQQY. Residues 238-366 enclose the Nudix hydrolase domain; it reads STVPTYGAIL…LPAYLQGNKF (129 aa). The Nudix box signature appears at 273 to 294; the sequence is GKINQAEPPRDAAIRETFEETG. The Mg(2+) site is built by E288 and E292. Disordered regions lie at residues 556 to 576 and 623 to 655; these read IMHS…TPTA and ISST…SSQV. Composition is skewed to polar residues over residues 623-632 and 646-655; these read ISSTQKQSIP and SASLSGSSQV.

The protein belongs to the Nudix hydrolase family. DCP2 subfamily. May be a component of the decapping complex composed of dcap-1 and dcap-2. Requires Mg(2+) as cofactor. The cofactor is Mn(2+). Expressed in sensory neurons.

The protein localises to the cytoplasmic granule. Its subcellular location is the cytoplasm. The protein resides in the perinuclear region. It carries out the reaction a 5'-end (N(7)-methyl 5'-triphosphoguanosine)-ribonucleoside in mRNA + H2O = N(7)-methyl-GDP + a 5'-end phospho-ribonucleoside in mRNA + 2 H(+). The enzyme catalyses a 5'-end (N(2),N(2),N(7)-trimethyl 5'-triphosphoguanosine)-ribonucleoside in mRNA + H2O = N(2),N(2),N(7)-trimethyl-GDP + a 5'-end phospho-ribonucleoside in mRNA + 2 H(+). Inhibited by capped and uncapped RNA. Not inhibited by dinucleotide cap or methylated nucleotide analogs. Decapping metalloenzyme that catalyzes the cleavage of the cap structure on mRNAs. Removes the 7-methyl guanine cap structure from mRNA molecules, yielding a 5'-phosphorylated mRNA fragment and 7m-GDP. RNA-decapping enzyme although it does not bind the RNA cap. May contribute to gene regulation in multiple RNA pathways including monomethylguanosine- and trimethylguanosine-capped RNAs. In oocytes, may play a role in the response to stress induced by heat shock, osmotic stress and anoxia. Required for the developmental axon guidance and regrowth of PLM touch receptor neurons. Early in embryogenesis, plays a role in ciliary shape formation in sensory neurons. Promotes survival at high temperatures. The protein is m7GpppN-mRNA hydrolase dcap-2 of Caenorhabditis elegans.